A 1116-amino-acid polypeptide reads, in one-letter code: Anillin (1116 aa).

2 stretches are compositionally biased toward basic and acidic residues: residues M1 to D25 and K85 to K94. Disordered regions lie at residues M1–R188, D205–T257, K304–T363, and N443–V522. Positions A101 to S119 are enriched in polar residues. Basic and acidic residues predominate over residues S120–S133. The interval L142 to P254 is interactions with myh9 and myh10. Positions S226–S242 are enriched in low complexity. An interaction with F-actin region spans residues K255 to A418. Composition is skewed to polar residues over residues K304–Q326 and Y336–Q356. Residues S416 to N443 adopt a coiled-coil conformation. Positions Q453–S472 are enriched in polar residues. Residues S975 to V1099 enclose the PH domain.

Interacts with and bundles F-actin. Interacts with the non-muscle myosin II heavy chains myh9 and myh10, and these interactions may be enhanced by the phosphorylation of myosin II regulatory light chain by mylk.

It is found in the nucleus. Its subcellular location is the cytoplasm. The protein localises to the cytoskeleton. It localises to the cell cortex. The protein resides in the cell projection. It is found in the bleb. Functionally, required for cytokinesis. Essential for the structural integrity of the cleavage furrow and for completion of cleavage furrow ingression. Plays a role in bleb assembly during metaphase and anaphase of mitosis. May play a significant role in podocyte cell migration. The sequence is that of Anillin (anln) from Xenopus laevis (African clawed frog).